A 255-amino-acid polypeptide reads, in one-letter code: tRNA (guanine-N(7)-)-methyltransferase (255 aa).

Positions 1-31 are disordered; the sequence is MMHDDPNEAGLPPHNDAIPDETAEGADEVNP. The segment covering 18 to 27 has biased composition (acidic residues); sequence IPDETAEGAD. S-adenosyl-L-methionine-binding residues include Glu86, Glu111, Asp138, and Asp161. Asp161 is an active-site residue. Residues Lys165, Asp197, and 232 to 235 each bind substrate; that span reads TKFE.

This sequence belongs to the class I-like SAM-binding methyltransferase superfamily. TrmB family.

The catalysed reaction is guanosine(46) in tRNA + S-adenosyl-L-methionine = N(7)-methylguanosine(46) in tRNA + S-adenosyl-L-homocysteine. It participates in tRNA modification; N(7)-methylguanine-tRNA biosynthesis. Catalyzes the formation of N(7)-methylguanine at position 46 (m7G46) in tRNA. The chain is tRNA (guanine-N(7)-)-methyltransferase from Burkholderia cenocepacia (strain HI2424).